A 306-amino-acid chain; its full sequence is SDS degradation transcriptional activation protein (306 aa).

In terms of domain architecture, HTH lysR-type spans 1 to 59 (MNDLRQLRHFVALAEHGHFARAAEAVNLSQPALSRSIQALENGLGCRLLDRGPRQVSLT). The segment at residues 19-38 (FARAAEAVNLSQPALSRSIQ) is a DNA-binding region (H-T-H motif).

Belongs to the LysR transcriptional regulatory family.

In terms of biological role, activates the transcription of the sdsA gene for sodium dodecyl sulfate (SDS) degradation. The sequence is that of SDS degradation transcriptional activation protein (sdsB) from Pseudomonas sp. (strain ATCC 19151).